We begin with the raw amino-acid sequence, 301 residues long: MDPQQIKAALGSGLLSFPVTPFDAENRFAAAPYQKHVEWLSGFDAPVLFAAGGTGEFFSLTPDEIPAIVKAAKESAGKTAIVSGCGYGTEIARGIARSVEAAGGDGILLLPHYLIDAPQEGLYAHVRAVCQATGMGVMVYNRDNAVLQADTLARLCDDCPNLVGFKDGTGDIGLVRQITAKMGDRLTYLGGMPTAELFAEAYLGASFTTYSSAVFNFVPALANKFYAALRAGDRATCESILNSFFYPFMELRSRRKGYAVAAVKAGVRLVGFDAGPVRAPLSDLTGEEEEILKALIDAHRE.

It belongs to the DapA family.

It catalyses the reaction 5-dehydro-4-deoxy-D-glucarate + H(+) = 2,5-dioxopentanoate + CO2 + H2O. It functions in the pathway carbohydrate acid metabolism; D-glucarate degradation; 2,5-dioxopentanoate from D-glucarate: step 2/2. The protein is Probable 5-dehydro-4-deoxyglucarate dehydratase of Cereibacter sphaeroides (strain ATCC 17023 / DSM 158 / JCM 6121 / CCUG 31486 / LMG 2827 / NBRC 12203 / NCIMB 8253 / ATH 2.4.1.) (Rhodobacter sphaeroides).